A 157-amino-acid chain; its full sequence is Major allergen Alt a 1 (157 aa).

The N-terminal stretch at 1–18 is a signal peptide; the sequence is MQFTTIASLFAAAGLAAA. The region spanning 35–153 is the AA1-like domain; sequence EGDYVWKISE…ADAYITLVTL (119 aa). 2 disulfide bridges follow: C74–C89 and C128–C140.

Belongs to the ALTA1 family. Homodimer; disulfide-linked.

It is found in the spore wall. It localises to the secreted. May bind and inhibit the beta-glucanase activity of host plant thaumatin-like proteins. This chain is Major allergen Alt a 1 (ALTA1), found in Alternaria alternata (Alternaria rot fungus).